The following is a 454-amino-acid chain: Chromosomal replication initiator protein DnaA (454 aa).

Residues 1–74 (MFDLEKFWDS…IQSAYAYAGI (74 aa)) are domain I, interacts with DnaA modulators. The domain II stretch occupies residues 74 to 116 (IDIYPVFVVKNGPTPSSERMLEPQPQAKPEKARPQGREFTKDL). A disordered region spans residues 88–112 (PSSERMLEPQPQAKPEKARPQGREF). A compositionally biased stretch (basic and acidic residues) spans 101–112 (KPEKARPQGREF). Positions 117 to 333 (RLNEKYTFEN…GALVKVQAQA (217 aa)) are domain III, AAA+ region. 4 residues coordinate ATP: G161, G163, K164, and T165. Residues 334–454 (TIQKQDINIG…VSDLRQMLER (121 aa)) are domain IV, binds dsDNA.

The protein belongs to the DnaA family. In terms of assembly, oligomerizes as a right-handed, spiral filament on DNA at oriC.

It localises to the cytoplasm. Its function is as follows. Plays an essential role in the initiation and regulation of chromosomal replication. ATP-DnaA binds to the origin of replication (oriC) to initiate formation of the DNA replication initiation complex once per cell cycle. Binds the DnaA box (a 9 base pair repeat at the origin) and separates the double-stranded (ds)DNA. Forms a right-handed helical filament on oriC DNA; dsDNA binds to the exterior of the filament while single-stranded (ss)DNA is stabiized in the filament's interior. The ATP-DnaA-oriC complex binds and stabilizes one strand of the AT-rich DNA unwinding element (DUE), permitting loading of DNA polymerase. After initiation quickly degrades to an ADP-DnaA complex that is not apt for DNA replication. Binds acidic phospholipids. This is Chromosomal replication initiator protein DnaA from Lactobacillus delbrueckii subsp. bulgaricus (strain ATCC 11842 / DSM 20081 / BCRC 10696 / JCM 1002 / NBRC 13953 / NCIMB 11778 / NCTC 12712 / WDCM 00102 / Lb 14).